We begin with the raw amino-acid sequence, 273 residues long: uncharacterized protein (273 aa).

In terms of domain architecture, AB hydrolase-1 spans 29-131; that stretch reads TLVCVHGFLS…VVLLCSSGYL (103 aa). Catalysis depends on residues Ser102 and His254.

The protein belongs to the DmpD/TodF/XylF esterase family.

This is an uncharacterized protein from Bacillus subtilis (strain 168).